Reading from the N-terminus, the 745-residue chain is MFNEITKSVTWNGKVLELSTGKIARQADGAVTVKMGNSVLLCTVVVANKAKEGIGFFPLTINYREMAYAAGKIPGGFFKREGKASDREVLVSRLIDRPIRPLFHPAFVNETHVTCSVLSYDPEIPVDILAIIGASAALSLSPAPYLEMVAASKVGLINGEFVLNPTLELLKTSQLDLVVAGTSDSVMMVESEAHLLSEEQMLEAVKFGFESFQPVIKIIKELAEEAKKPKLEMQDLYPASLKKEIEKLFVKEIEQAFAIKSKQERSTNLDLIPEKVLTHFVSDIENKKYSNYQIESALKAIESDILRNEILEKNRRIDGRSTTDIRQIACEIGLLPSAHGSALFTRGETQSLVSTTFGTSLDEQIVDSLEGEYKERFMLNYIFPPYSVNEAMPMKVPSRREVGHGKLAWRAINPILPNKVQFPYSIRVVAETTESNGSSSMATVCGSSLALMYAGVPIKAPVAGIAMGLVKEGKKFAVLSDILGDEDYFGDMDFKVAGTSEGITALQMDIKISGVDFKIMKVALEQARLGRLHILEQMNKVISKPNNELSKNAPSTTTIKIDKDKIRDIIGPGGKVIKEICEISGAKIDISDDGTVSIYASDRDKLKVALDKIKAIAVEPEIGEIFNGTVMKVLDSGAFINYLGNKDGFVHISEISEERIETVSSVLKQGDIVKVKLIGFDNKGKAKLTIKNADKDKSSNNTKPKTNAKDNSEPEQRRDSSKKRAWNEDNNAETAEVITERKYFN.

The Mg(2+) site is built by Asp-487 and Asp-493. Residues 554–613 form the KH domain; the sequence is PSTTTIKIDKDKIRDIIGPGGKVIKEICEISGAKIDISDDGTVSIYASDRDKLKVALDKI. Positions 623–691 constitute an S1 motif domain; sequence GEIFNGTVMK…NKGKAKLTIK (69 aa). The disordered stretch occupies residues 691–745; that stretch reads KNADKDKSSNNTKPKTNAKDNSEPEQRRDSSKKRAWNEDNNAETAEVITERKYFN. Positions 707–719 are enriched in basic and acidic residues; sequence NAKDNSEPEQRRD.

Belongs to the polyribonucleotide nucleotidyltransferase family. Mg(2+) serves as cofactor.

It is found in the cytoplasm. The catalysed reaction is RNA(n+1) + phosphate = RNA(n) + a ribonucleoside 5'-diphosphate. Involved in mRNA degradation. Catalyzes the phosphorolysis of single-stranded polyribonucleotides processively in the 3'- to 5'-direction. The protein is Polyribonucleotide nucleotidyltransferase of Rickettsia massiliae (strain Mtu5).